A 236-amino-acid polypeptide reads, in one-letter code: uncharacterized protein (236 aa).

Residues 1 to 12 (MKLLGHRKSHGH) are compositionally biased toward basic residues. The disordered stretch occupies residues 1–108 (MKLLGHRKSH…KAANRARMTE (108 aa)). The span at 13–31 (QRADASPDAGSKDGCRPDS) shows a compositional bias: basic and acidic residues. Positions 32-47 (GRTSGSDTSRGSQTTG) are enriched in low complexity. Basic residues predominate over residues 52–65 (PTPKRNQSRRHTKK). Residues 67–78 (PVAPAPMTAAQA) show a composition bias toward low complexity. Positions 90-108 (LSREERRAEKAANRARMTE) are enriched in basic and acidic residues. Helical transmembrane passes span 142 to 162 (NLLGLFMPSALTLLFVMFAVP) and 166 to 186 (FYLSPAMLILLALMTIDAIIL).

It is found in the cell membrane. This is an uncharacterized protein from Mycobacterium tuberculosis (strain CDC 1551 / Oshkosh).